A 118-amino-acid chain; its full sequence is Large ribosomal subunit protein uL18 (118 aa).

This sequence belongs to the universal ribosomal protein uL18 family. Part of the 50S ribosomal subunit; part of the 5S rRNA/L5/L18/L25 subcomplex. Contacts the 5S and 23S rRNAs.

Functionally, this is one of the proteins that bind and probably mediate the attachment of the 5S RNA into the large ribosomal subunit, where it forms part of the central protuberance. The protein is Large ribosomal subunit protein uL18 of Campylobacter lari (strain RM2100 / D67 / ATCC BAA-1060).